The sequence spans 552 residues: Rhodopsin kinase GRK7 (552 aa).

Ser-36 carries the phosphoserine; by PKA modification. An RGS domain is found at 56-176; sequence FHSLCEQQPI…LASPFYDKFL (121 aa). Positions 191-454 constitute a Protein kinase domain; that stretch reads FEEFRVLGKG…SDDPRKHHFF (264 aa). ATP is bound by residues 197–205 and Lys-220; that span reads LGKGGFGEV. The active-site Proton acceptor is Asp-316. The 66-residue stretch at 455–520 folds into the AGC-kinase C-terminal domain; that stretch reads KTINFPRLEA…GAVPIAWQEE (66 aa). Cysteine methyl ester is present on Cys-549. The S-geranylgeranyl cysteine moiety is linked to residue Cys-549. Residues 550 to 552 constitute a propeptide, removed in mature form; sequence LLL.

Belongs to the protein kinase superfamily. AGC Ser/Thr protein kinase family. GPRK subfamily. In terms of assembly, interacts (when prenylated) with PDE6D; this promotes release from membranes. Autophosphorylated in vitro at Ser-490. Phosphorylation at Ser-36 is regulated by light and activated by cAMP.

It is found in the membrane. The catalysed reaction is L-threonyl-[rhodopsin] + ATP = O-phospho-L-threonyl-[rhodopsin] + ADP + H(+). It carries out the reaction L-seryl-[rhodopsin] + ATP = O-phospho-L-seryl-[rhodopsin] + ADP + H(+). Inhibited by phosphorylation of Ser-36. Retina-specific kinase involved in the shutoff of the photoresponse and adaptation to changing light conditions via cone opsin phosphorylation, including rhodopsin (RHO). This is Rhodopsin kinase GRK7 (GRK7) from Bos taurus (Bovine).